The chain runs to 488 residues: Cobyric acid synthase (488 aa).

The GATase cobBQ-type domain occupies Val248–Ala441. Cys328 acts as the Nucleophile in catalysis. The active site involves His433.

Belongs to the CobB/CobQ family. CobQ subfamily.

The protein operates within cofactor biosynthesis; adenosylcobalamin biosynthesis. Its function is as follows. Catalyzes amidations at positions B, D, E, and G on adenosylcobyrinic A,C-diamide. NH(2) groups are provided by glutamine, and one molecule of ATP is hydrogenolyzed for each amidation. This is Cobyric acid synthase from Burkholderia vietnamiensis (strain G4 / LMG 22486) (Burkholderia cepacia (strain R1808)).